Here is a 288-residue protein sequence, read N- to C-terminus: Threonine-rich protein (288 aa).

Residues 1-20 form the signal peptide; sequence MKAFLLSLATLLACIVLTES. Over residues 141-150 the composition is skewed to polar residues; sequence TTVTPQTTDG. Positions 141–260 are disordered; the sequence is TTVTPQTTDG…PAPTTTPAPT (120 aa). Residues 151–253 show a composition bias toward low complexity; it reads NTTTEAPTST…TAAPTTTPAP (103 aa).

As to expression, component of the acid-insoluble and acid-soluble organic matrix of the aragonitic skeleton (at protein level).

The protein localises to the secreted. The protein is Threonine-rich protein of Acropora millepora (Staghorn coral).